The primary structure comprises 359 residues: Histidinol-phosphate aminotransferase 1 (359 aa).

Position 216 is an N6-(pyridoxal phosphate)lysine (Lys-216).

It belongs to the class-II pyridoxal-phosphate-dependent aminotransferase family. Histidinol-phosphate aminotransferase subfamily. As to quaternary structure, homodimer. Pyridoxal 5'-phosphate is required as a cofactor.

The enzyme catalyses L-histidinol phosphate + 2-oxoglutarate = 3-(imidazol-4-yl)-2-oxopropyl phosphate + L-glutamate. The protein operates within amino-acid biosynthesis; L-histidine biosynthesis; L-histidine from 5-phospho-alpha-D-ribose 1-diphosphate: step 7/9. The protein is Histidinol-phosphate aminotransferase 1 (hisC1) of Caulobacter vibrioides (strain ATCC 19089 / CIP 103742 / CB 15) (Caulobacter crescentus).